We begin with the raw amino-acid sequence, 388 residues long: MSKEYLFTSESVSEGHPDKVADQVSDGVLDAILATDPQARVACETLVSTGLVVISGEITTTAHPNYREIAQEVIRRIGYDNSDIGFDYKSCAVLAAINRQSADIAQGVNEGEGLDLDQGAGDQGLMFGYACNETPSLIPLPIYYAHRIMQRQSELRKDGRLNWLRPDAKSQLTVRYVDGKPVAIDTVVVSTQHSPEVSHAQITELVIEEIIKPVLPSALMQGEVRYLINPTGRFVIGGPHGDCGLTGRKIIVDTYGGAAHHGGGAFSGKDPSKVDRSAAYAGRWVAKNIVAAGLADRCEVQVAYAIGVARPVSMMIETFGTGRITDEKIVELVQRHFDLRPKAIIQELNLLRPIYGKTAAYGHFGRDEPEFTWEATDKAAALRADAGL.

An ATP-binding site is contributed by His-16. Asp-18 provides a ligand contact to Mg(2+). Position 44 (Glu-44) interacts with K(+). L-methionine contacts are provided by Glu-57 and Gln-100. Residues 100 to 110 (QSADIAQGVNE) form a flexible loop region. Residues 167-169 (DAK), 233-234 (RF), Asp-242, 248-249 (RK), Ala-265, and Lys-269 each bind ATP. Asp-242 contributes to the L-methionine binding site. Lys-273 contributes to the L-methionine binding site.

It belongs to the AdoMet synthase family. As to quaternary structure, homotetramer; dimer of dimers. Mg(2+) is required as a cofactor. K(+) serves as cofactor.

It is found in the cytoplasm. The catalysed reaction is L-methionine + ATP + H2O = S-adenosyl-L-methionine + phosphate + diphosphate. It participates in amino-acid biosynthesis; S-adenosyl-L-methionine biosynthesis; S-adenosyl-L-methionine from L-methionine: step 1/1. Catalyzes the formation of S-adenosylmethionine (AdoMet) from methionine and ATP. The overall synthetic reaction is composed of two sequential steps, AdoMet formation and the subsequent tripolyphosphate hydrolysis which occurs prior to release of AdoMet from the enzyme. This is S-adenosylmethionine synthase from Aromatoleum aromaticum (strain DSM 19018 / LMG 30748 / EbN1) (Azoarcus sp. (strain EbN1)).